Consider the following 586-residue polypeptide: Nucleus accumbens-associated protein 2 (586 aa).

In terms of domain architecture, BTB spans 30-94 (CDVSIVVKGQ…CYTGKLTMAA (65 aa)). K171 is covalently cross-linked (Glycyl lysine isopeptide (Lys-Gly) (interchain with G-Cter in SUMO2)). The segment at 177–196 (MPPASGPGLASKRPLETGPR) is disordered. A Glycyl lysine isopeptide (Lys-Gly) (interchain with G-Cter in SUMO2) cross-link involves residue K215. Positions 236–272 (QVPYPPGERTSPGASSLPTTDSPTSYHNEEDEEDDEA) are disordered. Positions 247 to 261 (PGASSLPTTDSPTSY) are enriched in polar residues. Residues K297, K427, and K454 each participate in a glycyl lysine isopeptide (Lys-Gly) (interchain with G-Cter in SUMO2) cross-link. The BEN domain maps to 349–446 (GSGVYITRGQ…DMCTNARRVR (98 aa)). Positions 542-586 (APEQLPADGQSSPQAFEQGNTSSSRPQTPVATATRRPEGTYAGTL) are disordered. Positions 550–572 (GQSSPQAFEQGNTSSSRPQTPVA) are enriched in polar residues.

As to quaternary structure, homooligomer; mediated by the BTB domain. Interacts with the NuRD complex. Interacts (via C-terminal part) with HDAC2. Interacts (via BTB domain) with MTA1, MTA2 and MTA3.

The protein localises to the nucleus. In terms of biological role, functions as a transcriptional repressor through its association with the NuRD complex. Recruits the NuRD complex to the promoter of MDM2, leading to the repression of MDM2 transcription and subsequent stability of p53/TP53. This Mus musculus (Mouse) protein is Nucleus accumbens-associated protein 2 (Nacc2).